The chain runs to 272 residues: Ribosomal RNA small subunit methyltransferase A (272 aa).

Residues asparagine 18, leucine 20, glycine 45, glutamate 66, aspartate 91, and asparagine 113 each contribute to the S-adenosyl-L-methionine site.

This sequence belongs to the class I-like SAM-binding methyltransferase superfamily. rRNA adenine N(6)-methyltransferase family. RsmA subfamily.

The protein localises to the cytoplasm. It carries out the reaction adenosine(1518)/adenosine(1519) in 16S rRNA + 4 S-adenosyl-L-methionine = N(6)-dimethyladenosine(1518)/N(6)-dimethyladenosine(1519) in 16S rRNA + 4 S-adenosyl-L-homocysteine + 4 H(+). Specifically dimethylates two adjacent adenosines (A1518 and A1519) in the loop of a conserved hairpin near the 3'-end of 16S rRNA in the 30S particle. May play a critical role in biogenesis of 30S subunits. This chain is Ribosomal RNA small subunit methyltransferase A, found in Yersinia pseudotuberculosis serotype O:1b (strain IP 31758).